A 305-amino-acid chain; its full sequence is GMP synthase [glutamine-hydrolyzing] subunit B (305 aa).

One can recognise a GMPS ATP-PPase domain in the interval 2–184 (VKPEKFIPKA…LQLPEEICER (183 aa)). 29–35 (SGGVDSS) contacts ATP.

Heterodimer composed of a glutamine amidotransferase subunit (A) and a GMP-binding subunit (B).

The enzyme catalyses XMP + L-glutamine + ATP + H2O = GMP + L-glutamate + AMP + diphosphate + 2 H(+). It participates in purine metabolism; GMP biosynthesis; GMP from XMP (L-Gln route): step 1/1. In terms of biological role, catalyzes the synthesis of GMP from XMP. In Methanosarcina acetivorans (strain ATCC 35395 / DSM 2834 / JCM 12185 / C2A), this protein is GMP synthase [glutamine-hydrolyzing] subunit B (guaAB).